The sequence spans 368 residues: MSKRDYYQVLGVPRTASEDDLKKAYRRCAMKYHPDRNPGDAAAEAAFKECKEAYEVLADTKKRKLYDTHGHAAFEHGVGGGNAPDMNDIFGDIFGNIFGGARASRRGADVGYMVELDLEEAVAGVERQIQIPTLVECTHCHGSGSEDGHVETCGTCRGSGQVRIQRGIFAMQQTCPHCGGRGVIIRNPCKVCNGAGRVEDHKTLSVKIPAGVDNGDRIRLSGEGEQGPEGVPPGDLYVEVRVREHPIFQRDGDDLHCEVPVRISQAALGDIVRVATLDGEAEIRIPAETQSGKLFRLRGKGVRSVRSRTEGDLYCRIVVETPVNLTAEQRKLLEQFEMTFAGEDARKHSPKSATFLDGVKSFWDRMTS.

Positions 5–70 (DYYQVLGVPR…KKRKLYDTHG (66 aa)) constitute a J domain. The CR-type zinc-finger motif lies at 124 to 201 (GVERQIQIPT…CNGAGRVEDH (78 aa)). 8 residues coordinate Zn(2+): C137, C140, C153, C156, C175, C178, C189, and C192. CXXCXGXG motif repeat units lie at residues 137–144 (CTHCHGSG), 153–160 (CGTCRGSG), 175–182 (CPHCGGRG), and 189–196 (CKVCNGAG).

The protein belongs to the DnaJ family. Homodimer. It depends on Zn(2+) as a cofactor.

The protein resides in the cytoplasm. Participates actively in the response to hyperosmotic and heat shock by preventing the aggregation of stress-denatured proteins and by disaggregating proteins, also in an autonomous, DnaK-independent fashion. Unfolded proteins bind initially to DnaJ; upon interaction with the DnaJ-bound protein, DnaK hydrolyzes its bound ATP, resulting in the formation of a stable complex. GrpE releases ADP from DnaK; ATP binding to DnaK triggers the release of the substrate protein, thus completing the reaction cycle. Several rounds of ATP-dependent interactions between DnaJ, DnaK and GrpE are required for fully efficient folding. Also involved, together with DnaK and GrpE, in the DNA replication of plasmids through activation of initiation proteins. This chain is Chaperone protein DnaJ, found in Xylella fastidiosa (strain 9a5c).